We begin with the raw amino-acid sequence, 441 residues long: Cytochrome c biogenesis protein Ccs1 (441 aa).

The next 3 helical transmembrane spans lie at 19–39, 78–98, and 164–184; these read LKLA…GTVI, TWWF…CTLA, and IGPI…LLGN.

The protein belongs to the Ccs1/CcsB family. As to quaternary structure, may interact with CcsA.

The protein localises to the plastid. Its subcellular location is the chloroplast thylakoid membrane. In terms of biological role, required during biogenesis of c-type cytochromes (cytochrome c6 and cytochrome f) at the step of heme attachment. In Rhodomonas salina (Cryptomonas salina), this protein is Cytochrome c biogenesis protein Ccs1.